We begin with the raw amino-acid sequence, 177 residues long: uncharacterized protein (177 aa).

Positions 10 to 177 (LILRQITDQD…NVYSIVKPRE (168 aa)) constitute an N-acetyltransferase domain.

Belongs to the acetyltransferase family.

This is an uncharacterized protein from Bacillus subtilis (strain 168).